Reading from the N-terminus, the 198-residue chain is MILITSLAVLVSYLIGSIPAAAWVARRRGVDIRKVGSGNSGATNVLRSLGKGPALLVAAFDILKGAIAVGLARALGLDPAWTALCGVAAVLGHNFSPFLGFRGGKGVATSFGTMLALDPVVGGGAFVVGVGCIWLTRFVSAGSILGALTAVTLAAALARPGWLLLIVAFLAALLTWQHRDNIRRLQAGNERRLGEKKD.

5 helical membrane-spanning segments follow: residues 1 to 21 (MILITSLAVLVSYLIGSIPAA), 52 to 72 (GPALLVAAFDILKGAIAVGLA), 81 to 101 (WTALCGVAAVLGHNFSPFLGF), 115 to 135 (LALDPVVGGGAFVVGVGCIWL), and 153 to 173 (LAAALARPGWLLLIVAFLAAL).

Belongs to the PlsY family. As to quaternary structure, probably interacts with PlsX.

The protein resides in the cell membrane. The catalysed reaction is an acyl phosphate + sn-glycerol 3-phosphate = a 1-acyl-sn-glycero-3-phosphate + phosphate. It participates in lipid metabolism; phospholipid metabolism. In terms of biological role, catalyzes the transfer of an acyl group from acyl-phosphate (acyl-PO(4)) to glycerol-3-phosphate (G3P) to form lysophosphatidic acid (LPA). This enzyme utilizes acyl-phosphate as fatty acyl donor, but not acyl-CoA or acyl-ACP. The chain is Glycerol-3-phosphate acyltransferase from Deinococcus geothermalis (strain DSM 11300 / CIP 105573 / AG-3a).